Here is a 254-residue protein sequence, read N- to C-terminus: Imidazole glycerol phosphate synthase subunit HisF (254 aa).

Catalysis depends on residues Asp-11 and Asp-130.

The protein belongs to the HisA/HisF family. Heterodimer of HisH and HisF.

The protein resides in the cytoplasm. The catalysed reaction is 5-[(5-phospho-1-deoxy-D-ribulos-1-ylimino)methylamino]-1-(5-phospho-beta-D-ribosyl)imidazole-4-carboxamide + L-glutamine = D-erythro-1-(imidazol-4-yl)glycerol 3-phosphate + 5-amino-1-(5-phospho-beta-D-ribosyl)imidazole-4-carboxamide + L-glutamate + H(+). The protein operates within amino-acid biosynthesis; L-histidine biosynthesis; L-histidine from 5-phospho-alpha-D-ribose 1-diphosphate: step 5/9. In terms of biological role, IGPS catalyzes the conversion of PRFAR and glutamine to IGP, AICAR and glutamate. The HisF subunit catalyzes the cyclization activity that produces IGP and AICAR from PRFAR using the ammonia provided by the HisH subunit. This Acidiphilium cryptum (strain JF-5) protein is Imidazole glycerol phosphate synthase subunit HisF.